A 170-amino-acid polypeptide reads, in one-letter code: uncharacterized protein (170 aa).

This is an uncharacterized protein from Saccharomyces cerevisiae (strain ATCC 204508 / S288c) (Baker's yeast).